A 184-amino-acid polypeptide reads, in one-letter code: MSPMLQIAAEEMENPLIPPIPELVIGLIAFVIVFGFLAKKLLPNINKVLEERREAIEGGIEKAEAAQTEAQSVLEQYKAQLAEARHEAARLRQEAQEQGATLIAEMRAEGQRQREEIIAAGHAQIQADRKAAASALRQDVGKLATELAGKLVGESLEDHARQSRVIDRFLDELDDKATTAEATR.

The helical transmembrane segment at L16–F36 threads the bilayer.

It belongs to the ATPase B chain family. In terms of assembly, F-type ATPases have 2 components, F(1) - the catalytic core - and F(0) - the membrane proton channel. F(1) has five subunits: alpha(3), beta(3), gamma(1), delta(1), epsilon(1). F(0) has three main subunits: a(1), b(2) and c(10-14). The alpha and beta chains form an alternating ring which encloses part of the gamma chain. F(1) is attached to F(0) by a central stalk formed by the gamma and epsilon chains, while a peripheral stalk is formed by the delta and b chains.

Its subcellular location is the cell membrane. Its function is as follows. F(1)F(0) ATP synthase produces ATP from ADP in the presence of a proton or sodium gradient. F-type ATPases consist of two structural domains, F(1) containing the extramembraneous catalytic core and F(0) containing the membrane proton channel, linked together by a central stalk and a peripheral stalk. During catalysis, ATP synthesis in the catalytic domain of F(1) is coupled via a rotary mechanism of the central stalk subunits to proton translocation. Component of the F(0) channel, it forms part of the peripheral stalk, linking F(1) to F(0). The chain is ATP synthase subunit b from Streptomyces coelicolor (strain ATCC BAA-471 / A3(2) / M145).